A 486-amino-acid chain; its full sequence is Shugoshin-1 (486 aa).

Residues 71 to 154 (IEVSRVELQK…QNRAKILEKK (84 aa)) adopt a coiled-coil conformation. Disordered regions lie at residues 137-163 (MSKT…CAPT), 187-209 (YTSC…RKSE), 222-251 (HSCR…ARLN), 323-346 (AGSS…PRKS), 382-403 (PIQH…DPGP), and 418-467 (TVAP…SRRA). Positions 331-346 (EAHKFDIEDPEPPRKS) are enriched in basic and acidic residues. Over residues 387 to 396 (QKRKLSRRKS) the composition is skewed to basic residues. Residues 423–433 (APSSSNALIEQ) are compositionally biased toward polar residues.

It belongs to the shugoshin family. Highly expressed in roots. Expressed in panicles. Expressed at low levels in leaves.

It localises to the nucleus. The protein resides in the nucleolus. The protein localises to the chromosome. Its subcellular location is the centromere. Its function is as follows. Plays a central role in chromosome cohesion during meiosis I by preventing premature dissociation of cohesin complex from centromeres after prophase, when most of cohesin complex dissociates from chromosomes arms. Required for the timely assembly and maintenance of synaptonemal complex (SC) during early prophase I. Required for maintenance of centromeric cohesion before prophase II and correct segregation of chromatids during meiosis II. Has apparently no function in mitosis. This Oryza sativa subsp. japonica (Rice) protein is Shugoshin-1.